Consider the following 435-residue polypeptide: ATP-dependent protease ATPase subunit HslU (435 aa).

ATP is bound by residues valine 18, glycine 60–glutamate 65, aspartate 248, glutamate 313, and arginine 385.

The protein belongs to the ClpX chaperone family. HslU subfamily. A double ring-shaped homohexamer of HslV is capped on each side by a ring-shaped HslU homohexamer. The assembly of the HslU/HslV complex is dependent on binding of ATP.

The protein resides in the cytoplasm. Functionally, ATPase subunit of a proteasome-like degradation complex; this subunit has chaperone activity. The binding of ATP and its subsequent hydrolysis by HslU are essential for unfolding of protein substrates subsequently hydrolyzed by HslV. HslU recognizes the N-terminal part of its protein substrates and unfolds these before they are guided to HslV for hydrolysis. The polypeptide is ATP-dependent protease ATPase subunit HslU (Beijerinckia indica subsp. indica (strain ATCC 9039 / DSM 1715 / NCIMB 8712)).